The following is a 486-amino-acid chain: Patatin-like phospholipase domain-containing protein 2 (486 aa).

Over 1–8 the chain is Cytoplasmic; sequence MFPKETTW. Residues 9-29 traverse the membrane as a helical segment; the sequence is NISFAGCGFLGVYHIGVASCL. The region spanning 10-179 is the PNPLA domain; that stretch reads ISFAGCGFLG…SDNLPLYELK (170 aa). Positions 14–19 match the GXGXXG motif; it reads GCGFLG. At 30-42 the chain is on the extracellular side; it reads REHAPFLVANATH. Residue N39 is glycosylated (N-linked (GlcNAc...) asparagine). A helical transmembrane segment spans residues 43–63; it reads IYGASAGALTATALVTGACLG. The GXSXG signature appears at 45 to 49; the sequence is GASAG. The active-site Nucleophile is the S47. Over 64 to 137 the chain is Cytoplasmic; sequence EAGANIIEVS…IITHFNSKEE (74 aa). A Glycyl lysine isopeptide (Lys-Gly) (interchain with G-Cter in ubiquitin) cross-link involves residue K92. The chain crosses the membrane as a helical span at residues 138 to 158; the sequence is LIQANVCSTFIPVYCGLIPPS. Topologically, residues 159 to 334 are extracellular; the sequence is LQGVRYVDGG…TTLSNMLPVR (176 aa). D166 (proton acceptor) is an active-site residue. Positions 166-168 match the DGA/G motif; sequence DGG. Residues 335 to 355 traverse the membrane as a helical segment; the sequence is LAMAMMVPYTLPLESAVSFTI. At 356–486 the chain is on the cytoplasmic side; that stretch reads RLLEWLPDVP…PQHPPSSPPC (131 aa). S377 carries the post-translational modification Phosphoserine; in vitro. Phosphoserine; by PKA occurs at positions 399 and 409. The residue at position 433 (S433) is a Phosphoserine; in vitro.

Interacts with ABHD5; this association stimulates PNPLA2 triglyceride hydrolase activity. Interacts with SERPINF1; this interaction stimulates the phospholipase A2 activity of PNPLA2. Despite a colocalization in lipid droplets, it probably does not interact with PLIN. Interacts with PLIN5; prevents interaction with ABHD5. Interacts with FAF2. Post-translationally, phosphorylation at Ser-409 by PKA is increased during fasting and moderate intensity exercise, and moderately increases lipolytic activity. Ubiquitinated by PEX2 in response to reactive oxygen species (ROS), leading to its degradation. Ubiquitination is stimulated by LDAH.

The protein localises to the lipid droplet. Its subcellular location is the cell membrane. The protein resides in the cytoplasm. It carries out the reaction a triacylglycerol + H2O = a diacylglycerol + a fatty acid + H(+). The enzyme catalyses a triacylglycerol + H2O = a 1,2-diacylglycerol + a fatty acid + H(+). It catalyses the reaction a triacylglycerol + H2O = a 1,3-diacylglycerol + a fatty acid + H(+). The catalysed reaction is a triacyl-sn-glycerol + H2O = a 1,3-diacyl-sn-glycerol + a fatty acid + H(+). It carries out the reaction a triacyl-sn-glycerol + H2O = a 2,3-diacyl-sn-glycerol + a fatty acid + H(+). The enzyme catalyses a 1-acylglycerol + a 1,3-diacylglycerol = a triacylglycerol + glycerol. It catalyses the reaction a 1-acylglycerol + a 1,2-diacylglycerol = a triacylglycerol + glycerol. The catalysed reaction is 2 a 1-acylglycerol = a 1,2-diacylglycerol + glycerol. It carries out the reaction a triacylglycerol + all-trans-retinol = an all-trans-retinyl ester + a diacylglycerol. The enzyme catalyses 1,2-di-(9Z-octadecenoyl)-glycerol + (9Z)-octadecenoate + H(+) = 1,2,3-tri-(9Z-octadecenoyl)-glycerol + H2O. It catalyses the reaction 1,2,3-tri-(9Z-octadecenoyl)-glycerol + H2O = 1,3-di-(9Z-octadecenoyl)-glycerol + (9Z)-octadecenoate + H(+). The catalysed reaction is 1-(9Z-octadecenoyl)-glycerol + 1,3-di-(9Z-octadecenoyl)-glycerol = 1,2,3-tri-(9Z-octadecenoyl)-glycerol + glycerol. It carries out the reaction 1-(9Z-octadecenoyl)-glycerol + 1,2-di-(9Z-octadecenoyl)-glycerol = 1,2,3-tri-(9Z-octadecenoyl)-glycerol + glycerol. The enzyme catalyses 2 1-(9Z-octadecenoyl)-glycerol = 1,2-di-(9Z-octadecenoyl)-glycerol + glycerol. It catalyses the reaction 1,2,3-tri-(9Z-octadecenoyl)-glycerol + all-trans-retinol = all-trans-retinyl 9Z-octadecenoate + di-(9Z)-octadecenoylglycerol. The catalysed reaction is 1,2,3-tri-(9Z)-hexadecenoylglycerol + H2O = 1,3-di-(9Z)-hexadecenoylglycerol + (9Z)-hexadecenoate + H(+). It carries out the reaction 1,2,3-tri-(9Z,12Z)-octadecadienoylglycerol + H2O = 1,3-di-(9Z,12Z)-octadecadienoylglycerol + (9Z,12Z)-octadecadienoate + H(+). The enzyme catalyses 1,2,3-tri-(9Z,12Z,15Z)-octadecatrienoylglycerol + H2O = 1,3-di-(9Z,12Z,15Z)-octadecatrienoylglycerol + (9Z,12Z,15Z)-octadecatrienoate + H(+). It catalyses the reaction 1,3-di-(9Z)-octadecenoyl-2-hexadecanoylglycerol + H2O = 1,3-di-(9Z-octadecenoyl)-glycerol + hexadecanoate + H(+). The catalysed reaction is 1,2-di-(9Z)-octadecenoyl-3-hexadecanoyl-sn-glycerol + H2O = 1-(9Z)-octadecenoyl-3-hexadecanoyl-sn-glycerol + (9Z)-octadecenoate + H(+). It carries out the reaction 1-hexadecanoyl-2,3-di-(9Z)-octadecenoyl-sn-glycerol + H2O = 1-hexadecanoyl-3-(9Z)-octadecenoyl-sn-glycerol + (9Z)-octadecenoate + H(+). The enzyme catalyses 1,2,3-tri-(9Z-octadecenoyl)-glycerol + H2O = 2,3-di-(9Z)-octadecenoyl-sn-glycerol + (9Z)-octadecenoate + H(+). It catalyses the reaction 1,2,3-tri-(9Z)-hexadecenoylglycerol + H2O = 2,3-di-(9Z)-hexadecenoyl-sn-glycerol + (9Z)-hexadecenoate + H(+). The catalysed reaction is 1,2,3-tri-(9Z,12Z)-octadecadienoylglycerol + H2O = 2,3-di-(9Z,12Z)-octadecadienoyl-sn-glycerol + (9Z,12Z)-octadecadienoate + H(+). It carries out the reaction 1,2,3-tri-(9Z,12Z,15Z)-octadecatrienoylglycerol + H2O = 2,3-di-(9Z,12Z,15Z)-octadecatrienoyl-sn-glycerol + (9Z,12Z,15Z)-octadecatrienoate + H(+). The enzyme catalyses 1,3-di-(9Z)-octadecenoyl-2-hexadecanoylglycerol + H2O = 2-hexadecanoyl-3-(9Z)-octadecenoyl-sn-glycerol + (9Z)-octadecenoate + H(+). It catalyses the reaction 1-hexadecanoyl-2,3-di-(9Z)-octadecenoyl-sn-glycerol + H2O = 2,3-di-(9Z)-octadecenoyl-sn-glycerol + hexadecanoate + H(+). The catalysed reaction is 1,2-di-(9Z)-octadecenoyl-3-hexadecanoyl-sn-glycerol + H2O = 2-(9Z-octadecenoyl)-3-hexadecanoyl-sn-glycerol + (9Z)-octadecenoate + H(+). It carries out the reaction a 1,2-diacyl-sn-glycero-3-phosphocholine + H2O = a 1-acyl-sn-glycero-3-phosphocholine + a fatty acid + H(+). The enzyme catalyses 1,2,3-tri-(9Z-octadecenoyl)-glycerol + 9-hydroxy-octadecanoate = 9-(9Z-octadecenoyloxy)-octadecanoate + 2,3-di-(9Z)-octadecenoyl-sn-glycerol. It catalyses the reaction 1-hexadecanoyl-2,3-di-(9Z)-octadecenoyl-sn-glycerol + 9-hydroxy-octadecanoate = 9-hexadecanoyloxy-octadecanoate + 2,3-di-(9Z)-octadecenoyl-sn-glycerol. The catalysed reaction is 1,2,3-tri-(10Z)-heptadecenoylglycerol + 9-hydroxy-octadecanoate = 2,3-di-(10Z-heptadecenoyl)-sn-glycerol + 9-(10Z-heptadecenoyloxy)-octadecanoate. It carries out the reaction 1,2,3-tri-(9Z,12Z)-octadecadienoylglycerol + 9-hydroxy-octadecanoate = 2,3-di-(9Z,12Z)-octadecadienoyl-sn-glycerol + 9-(9Z,12Z-octadecadienoyloxy)-octadecanoate. The enzyme catalyses 1,2,3-tri-(9Z)-hexadecenoylglycerol + 9-hydroxy-octadecanoate = 2,3-di-(9Z)-hexadecenoyl-sn-glycerol + 9-(9Z-hexadecenoyloxy)-octadecanoate. It catalyses the reaction 9-hydroxy-octadecanoate + 1,2-di-(9Z-octadecenoyl)-sn-glycerol = 9-(9Z-octadecenoyloxy)-octadecanoate + 2-(9Z-octadecenoyl)-glycerol. The catalysed reaction is 1-hexadecanoyl-2,3-di-(9Z)-octadecenoyl-sn-glycerol + 9-hydroxy-octadecanoate = 1-hexadecanoyl-3-(9Z)-octadecenoyl-sn-glycerol + 9-(9Z-octadecenoyloxy)-octadecanoate. It functions in the pathway glycerolipid metabolism; triacylglycerol degradation. Catalyzes the initial step in triglyceride hydrolysis in adipocyte and non-adipocyte lipid droplets. Exhibits a strong preference for the hydrolysis of long-chain fatty acid esters at the sn-2 position of the glycerol backbone and acts coordinately with LIPE/HLS and DGAT2 within the lipolytic cascade. Also possesses acylglycerol transacylase and phospholipase A2 activities. Transfers fatty acid from triglyceride to retinol, hydrolyzes retinylesters, and generates 1,3-diacylglycerol from triglycerides. Regulates adiposome size and may be involved in the degradation of adiposomes. Catalyzes the formation of an ester bond between hydroxy fatty acids and fatty acids derived from triglycerides or diglycerides to generate fatty acid esters of hydroxy fatty acids (FAHFAs) in adipocytes. Acts antagonistically with LDAH in regulation of cellular lipid stores. Inhibits LDAH-stimulated lipid droplet fusion. May play an important role in energy homeostasis. May play a role in the response of the organism to starvation, enhancing hydrolysis of triglycerides and providing free fatty acids to other tissues to be oxidized in situations of energy depletion. The polypeptide is Patatin-like phospholipase domain-containing protein 2 (PNPLA2) (Bos taurus (Bovine)).